Here is a 391-residue protein sequence, read N- to C-terminus: Autophagy-related protein 18d (391 aa).

Positions 1–24 (MDPRRNFQPGGYDSRNTFTSGSFG) are disordered. WD repeat units follow at residues 31-69 (SDEA…ETFR), 74-118 (DGGF…CISE), 203-243 (AHDS…RLQE), and 248-287 (VDRA…IGED).

This sequence belongs to the WD repeat PROPPIN family. As to quaternary structure, component of the PI(3,5)P2 regulatory complex at least composed of ATG18, SAC/FIG4, FAB1 and VAC14. As to expression, expressed in roots, stems, flowers and leaves.

Its subcellular location is the preautophagosomal structure membrane. The protein resides in the vacuole membrane. The PI(3,5)P2 regulatory complex regulates both the synthesis and turnover of phosphatidylinositol 3,5-bisphosphate (PtdIns(3,5)P2). Required for autophagy. This Arabidopsis thaliana (Mouse-ear cress) protein is Autophagy-related protein 18d (ATG18D).